A 132-amino-acid polypeptide reads, in one-letter code: Small ribosomal subunit protein uS8c (132 aa).

Belongs to the universal ribosomal protein uS8 family. As to quaternary structure, part of the 30S ribosomal subunit.

Its subcellular location is the plastid. The protein localises to the chloroplast. Functionally, one of the primary rRNA binding proteins, it binds directly to 16S rRNA central domain where it helps coordinate assembly of the platform of the 30S subunit. The sequence is that of Small ribosomal subunit protein uS8c (rps8) from Nandina domestica (Heavenly bamboo).